The primary structure comprises 368 residues: Phospho-N-acetylmuramoyl-pentapeptide-transferase (368 aa).

The next 9 membrane-spanning stretches (helical) occupy residues 23–43, 72–92, 98–118, 139–159, 170–190, 201–221, 238–258, 281–301, and 345–365; these read YLTF…IFAG, VPTM…FLWA, HVWL…IDDY, VTLG…SVLL, LSVD…TAVS, GLAA…AYLC, AGEV…FLWF, VIAL…VFFV, and KIVI…LMTL.

This sequence belongs to the glycosyltransferase 4 family. MraY subfamily. Mg(2+) serves as cofactor.

It is found in the cell inner membrane. It carries out the reaction UDP-N-acetyl-alpha-D-muramoyl-L-alanyl-gamma-D-glutamyl-meso-2,6-diaminopimeloyl-D-alanyl-D-alanine + di-trans,octa-cis-undecaprenyl phosphate = di-trans,octa-cis-undecaprenyl diphospho-N-acetyl-alpha-D-muramoyl-L-alanyl-D-glutamyl-meso-2,6-diaminopimeloyl-D-alanyl-D-alanine + UMP. It participates in cell wall biogenesis; peptidoglycan biosynthesis. Functionally, catalyzes the initial step of the lipid cycle reactions in the biosynthesis of the cell wall peptidoglycan: transfers peptidoglycan precursor phospho-MurNAc-pentapeptide from UDP-MurNAc-pentapeptide onto the lipid carrier undecaprenyl phosphate, yielding undecaprenyl-pyrophosphoryl-MurNAc-pentapeptide, known as lipid I. The polypeptide is Phospho-N-acetylmuramoyl-pentapeptide-transferase (Chlorobaculum tepidum (strain ATCC 49652 / DSM 12025 / NBRC 103806 / TLS) (Chlorobium tepidum)).